The following is a 309-amino-acid chain: HPr kinase/phosphorylase (309 aa).

Residues H138 and K159 contribute to the active site. An ATP-binding site is contributed by 153–160 (GQSGVGKS). Residue S160 coordinates Mg(2+). D177 functions as the Proton acceptor; for phosphorylation activity. Proton donor; for dephosphorylation activity in the catalytic mechanism. The segment at 201–210 (LEIRGLGIIN) is important for the catalytic mechanism of both phosphorylation and dephosphorylation. Position 202 (E202) interacts with Mg(2+). The active site involves R243. The tract at residues 264 to 269 (PVRPGR) is important for the catalytic mechanism of dephosphorylation.

Belongs to the HPrK/P family. Homohexamer. Requires Mg(2+) as cofactor.

It catalyses the reaction [HPr protein]-L-serine + ATP = [HPr protein]-O-phospho-L-serine + ADP + H(+). It carries out the reaction [HPr protein]-O-phospho-L-serine + phosphate + H(+) = [HPr protein]-L-serine + diphosphate. In terms of biological role, catalyzes the ATP- as well as the pyrophosphate-dependent phosphorylation of a specific serine residue in HPr, a phosphocarrier protein of the phosphoenolpyruvate-dependent sugar phosphotransferase system (PTS). HprK/P also catalyzes the pyrophosphate-producing, inorganic phosphate-dependent dephosphorylation (phosphorolysis) of seryl-phosphorylated HPr (P-Ser-HPr). The two antagonistic activities of HprK/P are regulated by several intracellular metabolites, which change their concentration in response to the absence or presence of rapidly metabolisable carbon sources (glucose, fructose, etc.) in the growth medium. Also phosphorylates/dephosphorylates the HPr-like catabolite repression protein crh on a specific serine residue. Therefore, by controlling the phosphorylation state of HPr and crh, HPrK/P is a sensor enzyme that plays a major role in the regulation of carbon metabolism and sugar transport: it mediates carbon catabolite repression (CCR), and regulates PTS-catalyzed carbohydrate uptake and inducer exclusion. The protein is HPr kinase/phosphorylase of Bacillus cereus (strain AH820).